A 545-amino-acid polypeptide reads, in one-letter code: Membrane protein insertase YidC (545 aa).

Transmembrane regions (helical) follow at residues 10-30, 319-339, 341-361, 407-427, 467-487, and 502-522; these read AVYL…FLFS, LLYF…NVIP, WGLS…PLTF, IGGC…YGLV, ILPF…SNVS, and MPIM…IYWI.

The protein belongs to the OXA1/ALB3/YidC family. Type 1 subfamily. Interacts with the Sec translocase complex via SecD. Specifically interacts with transmembrane segments of nascent integral membrane proteins during membrane integration.

The protein resides in the cell inner membrane. Functionally, required for the insertion and/or proper folding and/or complex formation of integral membrane proteins into the membrane. Involved in integration of membrane proteins that insert both dependently and independently of the Sec translocase complex, as well as at least some lipoproteins. Aids folding of multispanning membrane proteins. The chain is Membrane protein insertase YidC from Borrelia duttonii (strain Ly).